The sequence spans 170 residues: MSNGTPTHTLSVLVEDKPGVLARVSSLFSRRGFNIQSLAVGATEQKDMSRMTIVVSVEDSPLEQITKQLNKLINVIKIVEQEEDNSVSRELALIKVRADATTRGQIIEAVNLFRAKVVDVSTESLTIEATGTPEKLEALLRVLEPYGIREIAQSGVVSVSRGPRGIGAAK.

Residues 9 to 83 (TLSVLVEDKP…NVIKIVEQEE (75 aa)) form the ACT domain. Lys-46 is covalently cross-linked (Isoglutamyl lysine isopeptide (Lys-Gln) (interchain with Q-Cter in protein Pup)).

This sequence belongs to the acetolactate synthase small subunit family. In terms of assembly, dimer of large and small chains.

The catalysed reaction is 2 pyruvate + H(+) = (2S)-2-acetolactate + CO2. The protein operates within amino-acid biosynthesis; L-isoleucine biosynthesis; L-isoleucine from 2-oxobutanoate: step 1/4. Its pathway is amino-acid biosynthesis; L-valine biosynthesis; L-valine from pyruvate: step 1/4. The polypeptide is Acetolactate synthase small subunit (ilvH) (Mycolicibacterium smegmatis (strain ATCC 700084 / mc(2)155) (Mycobacterium smegmatis)).